The sequence spans 427 residues: Aspartate aminotransferase, mitochondrial (427 aa).

A mitochondrion-targeting transit peptide spans 1-26 (MALLKSRLLVGVARCQPCLAAVQGRA). 3 residues coordinate substrate: Gly-62, Trp-159, and Asn-212. Lys-276 is modified (N6-(pyridoxal phosphate)lysine). Arg-404 is a binding site for substrate.

It belongs to the class-I pyridoxal-phosphate-dependent aminotransferase family. Homodimer. It depends on pyridoxal 5'-phosphate as a cofactor.

It localises to the mitochondrion matrix. It carries out the reaction L-aspartate + 2-oxoglutarate = oxaloacetate + L-glutamate. The enzyme catalyses L-kynurenine + 2-oxoglutarate = kynurenate + L-glutamate + H2O. In terms of biological role, catalyzes the irreversible transamination of the L-tryptophan metabolite L-kynurenine to form kynurenic acid (KA). As a member of the malate-aspartate shuttle, it has a key role in the intracellular NAD(H) redox balance. Is important for metabolite exchange between mitochondria and cytosol, and for amino acid metabolism. The protein is Aspartate aminotransferase, mitochondrial (got2) of Xenopus tropicalis (Western clawed frog).